A 129-amino-acid polypeptide reads, in one-letter code: Putative membrane protein insertion efficiency factor (129 aa).

The protein belongs to the UPF0161 family.

The protein resides in the cell inner membrane. Could be involved in insertion of integral membrane proteins into the membrane. The chain is Putative membrane protein insertion efficiency factor from Rhodopseudomonas palustris (strain ATCC BAA-98 / CGA009).